A 521-amino-acid chain; its full sequence is AAA ATPase forming ring-shaped complexes (521 aa).

The stretch at 4-44 forms a coiled coil; it reads TEDLAALNDRLMAKNHALAEALSRAGKELTKAKSQLAQLAQ. 235 to 240 lines the ATP pocket; sequence GNGKTM.

This sequence belongs to the AAA ATPase family. As to quaternary structure, homohexamer. Assembles into a hexameric ring structure.

In Bifidobacterium longum (strain DJO10A), this protein is AAA ATPase forming ring-shaped complexes.